A 535-amino-acid chain; its full sequence is Prolyl 4-hydroxylase subunit alpha-2 (535 aa).

An N-terminal signal peptide occupies residues 1–21; the sequence is MKLWVSALLMAWFGVLSCVQA. N-linked (GlcNAc...) asparagine glycosylation is present at N115. The TPR repeat unit spans residues 207-240; the sequence is SQVLDYLSYAVFQLGDLHRALELTRRLLSLDPSH. N264 carries N-linked (GlcNAc...) asparagine glycosylation. In terms of domain architecture, Fe2OG dioxygenase spans 412 to 520; sequence TAELLQVANY…KWVSNKWFHE (109 aa). 2 residues coordinate Fe cation: H430 and D432. K480 is subject to N6-succinyllysine. H501 serves as a coordination point for Fe cation. Residue K511 participates in 2-oxoglutarate binding.

It belongs to the P4HA family. Heterotetramer of two alpha-2 chains and two beta chains (P4HB) (the beta chain is the multi-functional PDI), where P4HB plays the role of a structural subunit; this tetramer catalyzes the formation of 4-hydroxyproline in collagen. It depends on Fe(2+) as a cofactor. L-ascorbate serves as cofactor. In terms of tissue distribution, expressed in the heart, placenta, lung and pancreas.

The protein resides in the endoplasmic reticulum lumen. It catalyses the reaction L-prolyl-[collagen] + 2-oxoglutarate + O2 = trans-4-hydroxy-L-prolyl-[collagen] + succinate + CO2. Inhibited by poly(L-proline) only at very high concentrations. In terms of biological role, catalyzes the post-translational formation of 4-hydroxyproline in -Xaa-Pro-Gly- sequences in collagens and other proteins. The sequence is that of Prolyl 4-hydroxylase subunit alpha-2 (P4HA2) from Homo sapiens (Human).